We begin with the raw amino-acid sequence, 413 residues long: F-box protein CPR1 (413 aa).

The region spanning 1-48 is the F-box domain; the sequence is MATIPMDIVNDIFLRLPAKTLVRCRALSKPCYHLINDPDFIESHLHRV.

As to quaternary structure, part of a SCF (ASK-cullin-F-box) protein ligase complex. Interacts with SKP1A/ASK1, SPK1B/ASK2, ASK9, ASK10, ASK11, ASK13, ASK14, ASK16, ASK17, ASK18 and ASK19. Interacts with TRAF1B. As to expression, expressed in seedling, root, stem, leaves, inflorescence and silique, especially in veins and trichomes.

The protein localises to the cytoplasm. It localises to the nucleus. The protein operates within protein modification; protein ubiquitination. In terms of biological role, component of SCF(ASK-cullin-F-box) E3 ubiquitin ligase complexes, which may mediate the ubiquitination and subsequent proteasomal degradation of target proteins. Regulates negatively both salicylic acid (SA)-dependent and SA-independent defense signaling. The chain is F-box protein CPR1 (CPR1) from Arabidopsis thaliana (Mouse-ear cress).